The chain runs to 315 residues: Methionyl-tRNA formyltransferase (315 aa).

113–116 contacts (6S)-5,6,7,8-tetrahydrofolate; the sequence is SLLP.

The protein belongs to the Fmt family.

The catalysed reaction is L-methionyl-tRNA(fMet) + (6R)-10-formyltetrahydrofolate = N-formyl-L-methionyl-tRNA(fMet) + (6S)-5,6,7,8-tetrahydrofolate + H(+). Attaches a formyl group to the free amino group of methionyl-tRNA(fMet). The formyl group appears to play a dual role in the initiator identity of N-formylmethionyl-tRNA by promoting its recognition by IF2 and preventing the misappropriation of this tRNA by the elongation apparatus. This Escherichia coli O127:H6 (strain E2348/69 / EPEC) protein is Methionyl-tRNA formyltransferase.